The sequence spans 129 residues: Small ribosomal subunit protein uS11 (129 aa).

The protein belongs to the universal ribosomal protein uS11 family. As to quaternary structure, part of the 30S ribosomal subunit. Interacts with proteins S7 and S18. Binds to IF-3.

In terms of biological role, located on the platform of the 30S subunit, it bridges several disparate RNA helices of the 16S rRNA. Forms part of the Shine-Dalgarno cleft in the 70S ribosome. This is Small ribosomal subunit protein uS11 from Caulobacter vibrioides (strain ATCC 19089 / CIP 103742 / CB 15) (Caulobacter crescentus).